A 356-amino-acid polypeptide reads, in one-letter code: Zinc finger CCCH domain-containing protein 49 (356 aa).

C3H1-type zinc fingers lie at residues 120-146 (YSGT…HGVF) and 155-177 (YRTQ…AHSP). Residues 209–235 (ISPVSGSPPMSPRADSESSPMTQSLSR) are disordered. A compositionally biased stretch (polar residues) spans 225–235 (ESSPMTQSLSR).

The polypeptide is Zinc finger CCCH domain-containing protein 49 (Arabidopsis thaliana (Mouse-ear cress)).